Consider the following 182-residue polypeptide: Adenine phosphoribosyltransferase (182 aa).

It belongs to the purine/pyrimidine phosphoribosyltransferase family. As to quaternary structure, homodimer.

It is found in the cytoplasm. The enzyme catalyses AMP + diphosphate = 5-phospho-alpha-D-ribose 1-diphosphate + adenine. Its pathway is purine metabolism; AMP biosynthesis via salvage pathway; AMP from adenine: step 1/1. Its function is as follows. Catalyzes a salvage reaction resulting in the formation of AMP, that is energically less costly than de novo synthesis. This is Adenine phosphoribosyltransferase from Bordetella avium (strain 197N).